Consider the following 75-residue polypeptide: Guanine nucleotide-binding protein G(I)/G(S)/G(O) subunit gamma-4 (75 aa).

Residue C72 is modified to Cysteine methyl ester. Residue C72 is the site of S-geranylgeranyl cysteine attachment. The propeptide at 73 to 75 (TIL) is removed in mature form.

It belongs to the G protein gamma family. G proteins are composed of 3 units, alpha, beta and gamma. Interacts with beta-1 and beta-2, but not with beta-3. Interacts with KCNK1. Interacts (via C-terminus) with KCNK2/TREK-1 (via N-terminus); this interaction confers ion selectivity to Cl(-) and L-glutamate. Brain, kidney, pancreas, skeletal muscle and faintly in cardiac muscle.

The protein localises to the cell membrane. In terms of biological role, guanine nucleotide-binding proteins (G proteins) are involved as a modulator or transducer in various transmembrane signaling systems. The beta and gamma chains are required for the GTPase activity, for replacement of GDP by GTP, and for G protein-effector interaction. The sequence is that of Guanine nucleotide-binding protein G(I)/G(S)/G(O) subunit gamma-4 (GNG4) from Homo sapiens (Human).